A 383-amino-acid polypeptide reads, in one-letter code: uncharacterized protein (383 aa).

Belongs to the peptidase M20 family.

This is an uncharacterized protein from Staphylococcus epidermidis (strain ATCC 35984 / DSM 28319 / BCRC 17069 / CCUG 31568 / BM 3577 / RP62A).